Reading from the N-terminus, the 278-residue chain is Tryptophan synthase alpha chain (278 aa).

Residues E50 and D61 each act as proton acceptor in the active site.

The protein belongs to the TrpA family. As to quaternary structure, tetramer of two alpha and two beta chains.

It catalyses the reaction (1S,2R)-1-C-(indol-3-yl)glycerol 3-phosphate + L-serine = D-glyceraldehyde 3-phosphate + L-tryptophan + H2O. The protein operates within amino-acid biosynthesis; L-tryptophan biosynthesis; L-tryptophan from chorismate: step 5/5. Functionally, the alpha subunit is responsible for the aldol cleavage of indoleglycerol phosphate to indole and glyceraldehyde 3-phosphate. The chain is Tryptophan synthase alpha chain from Rhodopseudomonas palustris (strain HaA2).